Here is a 120-residue protein sequence, read N- to C-terminus: Small ribosomal subunit protein uS13 (120 aa).

The segment at G94–K120 is disordered.

Belongs to the universal ribosomal protein uS13 family. In terms of assembly, part of the 30S ribosomal subunit. Forms a loose heterodimer with protein S19. Forms two bridges to the 50S subunit in the 70S ribosome.

Its function is as follows. Located at the top of the head of the 30S subunit, it contacts several helices of the 16S rRNA. In the 70S ribosome it contacts the 23S rRNA (bridge B1a) and protein L5 of the 50S subunit (bridge B1b), connecting the 2 subunits; these bridges are implicated in subunit movement. Contacts the tRNAs in the A and P-sites. The sequence is that of Small ribosomal subunit protein uS13 from Aromatoleum aromaticum (strain DSM 19018 / LMG 30748 / EbN1) (Azoarcus sp. (strain EbN1)).